The primary structure comprises 134 residues: MENKKTIYFLCTGNSCRSQMAEAWGKKYLGDKWNVLSAGIEAHGVNPNAIKAMKEVDIDITDQTSDIIDRDILDKADLVVTLCGHANDVCPTTPPHVKRVHWGFDDPAGQEWSVFQRVRDEIGARIKKYAETGE.

Residues cysteine 11, cysteine 83, and cysteine 90 each act as nucleophile in the active site. Cystine bridges form between cysteine 11–cysteine 83 and cysteine 83–cysteine 90.

It belongs to the low molecular weight phosphotyrosine protein phosphatase family. Thioredoxin-coupled ArsC subfamily.

The protein localises to the cytoplasm. It carries out the reaction arsenate + [thioredoxin]-dithiol + H(+) = arsenite + [thioredoxin]-disulfide + H2O. Its function is as follows. Catalyzes the reduction of arsenate [As(V)] to arsenite [As(III)]. The protein is Arsenate reductase 1 of Bacillus cereus (strain ATCC 10987 / NRS 248).